A 201-amino-acid polypeptide reads, in one-letter code: E3 ubiquitin-protein ligase MIR1 (201 aa).

An RING-CH-type zinc finger spans residues 1-58 (MDSTGEFCWICHQPEGPLKRFCGCKGSCAVSHQDCLRGWLETSRRQTCALCGTPYSMK). The Cytoplasmic portion of the chain corresponds to 1 to 81 (MDSTGEFCWI…EEVLAAMEAC (81 aa)). Cys-8, Cys-11, Cys-22, Cys-24, His-32, Cys-35, Cys-48, and Cys-51 together coordinate Zn(2+). Residues 52–79 (GTPYSMKWKTKPLREWTWGEEEVLAAME) are DIRT. The chain crosses the membrane as a helical span at residues 82 to 102 (LPLVLIPLAVLMIVMGTWLLV). The Extracellular segment spans residues 103 to 113 (NHNGFLSPRMQ). The chain crosses the membrane as a helical span at residues 114-134 (VVLVVIVLLAMIVFSASASYV). Residues 135-201 (MVEGPGCLDT…RLGCVRLCCV (67 aa)) are Cytoplasmic-facing.

As to quaternary structure, interacts with host UBE2J2.

Its subcellular location is the host endoplasmic reticulum membrane. It catalyses the reaction [E2 ubiquitin-conjugating enzyme]-S-ubiquitinyl-L-cysteine + [acceptor protein]-L-cysteine = [E2 ubiquitin-conjugating enzyme]-L-cysteine + [acceptor protein]-S-ubiquitinyl-L-cysteine.. Its pathway is protein modification; protein ubiquitination. In terms of biological role, E3 ubiquitin-protein ligase that mediates ubiquitination of host surface class I (MHC-I) H-2D(b)/H2-D1 and H-2K(b)/H2-K1 molecules before they exit the endoplasmic reticulum, leading to their degradation by the endoplasmic reticulum-associated degradation (ERAD) system, thus blocking the immune detection of virus-infected cells. Mediates ubiquitination of lysine, as well as serine and threonine residues present in the cytoplasmic tail of surface class I molecules. Promotes ubiquitination of hydroxylated serine or threonine residues via ester bonds instead of the classical isopeptide linkage. The chain is E3 ubiquitin-protein ligase MIR1 (K3) from Murid herpesvirus 4 (MuHV-4).